We begin with the raw amino-acid sequence, 522 residues long: Tryptophan 2-halogenase (522 aa).

FAD is bound by residues alanine 17, glutamate 36, arginine 42, histidine 44, isoleucine 45, serine 48, arginine 103, isoleucine 127, and aspartate 296. Chloride is bound by residues serine 307 and glycine 308. Residue valine 309 coordinates FAD.

Belongs to the flavin-dependent halogenase family.

In terms of biological role, involved in the incorporation of a chlorinated tryptophan residue into halogenated forms of the secondary metabolites called chondramides. This Chondromyces crocatus protein is Tryptophan 2-halogenase.